Here is a 453-residue protein sequence, read N- to C-terminus: Ribulose bisphosphate carboxylase large chain (453 aa).

Positions 1–2 (MS) are excised as a propeptide. Position 3 is an N-acetylproline (Pro3). The residue at position 14 (Lys14) is an N6,N6,N6-trimethyllysine. Residues Asn123 and Thr173 each contribute to the substrate site. The active-site Proton acceptor is the Lys175. Lys177 provides a ligand contact to substrate. Lys201, Asp203, and Glu204 together coordinate Mg(2+). N6-carboxylysine is present on Lys201. Catalysis depends on His294, which acts as the Proton acceptor. Arg295, His327, and Ser379 together coordinate substrate.

Belongs to the RuBisCO large chain family. Type I subfamily. As to quaternary structure, heterohexadecamer of 8 large chains and 8 small chains; disulfide-linked. The disulfide link is formed within the large subunit homodimers. Mg(2+) serves as cofactor. In terms of processing, the disulfide bond which can form in the large chain dimeric partners within the hexadecamer appears to be associated with oxidative stress and protein turnover.

The protein resides in the plastid. The protein localises to the chloroplast. It catalyses the reaction 2 (2R)-3-phosphoglycerate + 2 H(+) = D-ribulose 1,5-bisphosphate + CO2 + H2O. The enzyme catalyses D-ribulose 1,5-bisphosphate + O2 = 2-phosphoglycolate + (2R)-3-phosphoglycerate + 2 H(+). Its function is as follows. RuBisCO catalyzes two reactions: the carboxylation of D-ribulose 1,5-bisphosphate, the primary event in carbon dioxide fixation, as well as the oxidative fragmentation of the pentose substrate in the photorespiration process. Both reactions occur simultaneously and in competition at the same active site. This chain is Ribulose bisphosphate carboxylase large chain, found in Valantia muralis (Wall valantia).